The chain runs to 477 residues: Glycogen synthase (477 aa).

Position 15 (lysine 15) interacts with ADP-alpha-D-glucose.

The protein belongs to the glycosyltransferase 1 family. Bacterial/plant glycogen synthase subfamily.

The catalysed reaction is [(1-&gt;4)-alpha-D-glucosyl](n) + ADP-alpha-D-glucose = [(1-&gt;4)-alpha-D-glucosyl](n+1) + ADP + H(+). Its pathway is glycan biosynthesis; glycogen biosynthesis. Synthesizes alpha-1,4-glucan chains using ADP-glucose. In Shigella boydii serotype 18 (strain CDC 3083-94 / BS512), this protein is Glycogen synthase.